The sequence spans 215 residues: Cytochrome b6 (215 aa).

A helical transmembrane segment spans residues 32–52; it reads IFYCIGGITFTCFLVQVATGF. C35 lines the heme c pocket. Residues H86 and H100 each coordinate heme b. Helical transmembrane passes span 90–110, 116–136, and 186–206; these read ASMM…TGGF, LTWV…VTGY, and LHTF…FLMI. Residues H187 and H202 each coordinate heme b.

This sequence belongs to the cytochrome b family. PetB subfamily. As to quaternary structure, the 4 large subunits of the cytochrome b6-f complex are cytochrome b6, subunit IV (17 kDa polypeptide, PetD), cytochrome f and the Rieske protein, while the 4 small subunits are PetG, PetL, PetM and PetN. The complex functions as a dimer. Heme b serves as cofactor. Heme c is required as a cofactor.

The protein resides in the plastid. Its subcellular location is the chloroplast thylakoid membrane. Its function is as follows. Component of the cytochrome b6-f complex, which mediates electron transfer between photosystem II (PSII) and photosystem I (PSI), cyclic electron flow around PSI, and state transitions. This Chlorella vulgaris (Green alga) protein is Cytochrome b6.